We begin with the raw amino-acid sequence, 197 residues long: Adenylate kinase (197 aa).

16 to 21 (GAGKGT) contacts ATP. Residues 36–65 (STGDILRDHVARGTELGQQVKPILDAGHLV) are NMP. Residues threonine 37, arginine 42, 63 to 65 (HLV), 90 to 93 (GFPR), and glutamine 97 contribute to the AMP site. An LID region spans residues 131–147 (ERGNQAQARGEAVRSDD). Arginine 132 provides a ligand contact to ATP. AMP is bound by residues arginine 144 and arginine 155. Residue glycine 183 coordinates ATP.

The protein belongs to the adenylate kinase family. As to quaternary structure, monomer.

It is found in the cytoplasm. The catalysed reaction is AMP + ATP = 2 ADP. It functions in the pathway purine metabolism; AMP biosynthesis via salvage pathway; AMP from ADP: step 1/1. Catalyzes the reversible transfer of the terminal phosphate group between ATP and AMP. Plays an important role in cellular energy homeostasis and in adenine nucleotide metabolism. The sequence is that of Adenylate kinase from Deinococcus deserti (strain DSM 17065 / CIP 109153 / LMG 22923 / VCD115).